Reading from the N-terminus, the 308-residue chain is Putative S-adenosyl-L-methionine-dependent methyltransferase Mjls_1073 (308 aa).

S-adenosyl-L-methionine-binding positions include D133 and 162–163 (DL).

Belongs to the UPF0677 family.

Its function is as follows. Exhibits S-adenosyl-L-methionine-dependent methyltransferase activity. This Mycobacterium sp. (strain JLS) protein is Putative S-adenosyl-L-methionine-dependent methyltransferase Mjls_1073.